A 150-amino-acid polypeptide reads, in one-letter code: UPF0098 protein CT_736 (150 aa).

Belongs to the UPF0098 family.

This Chlamydia trachomatis serovar D (strain ATCC VR-885 / DSM 19411 / UW-3/Cx) protein is UPF0098 protein CT_736.